Reading from the N-terminus, the 79-residue chain is MKLTCVLIITVLFLTASQLITADYSRDQRQYRAVRLGDEMRTFKGARDCGEQGQGCYTRPCCPGLHCAAGATGGGSCQP.

Positions 1 to 22 are cleaved as a signal peptide; sequence MKLTCVLIITVLFLTASQLITA. Residues 23 to 46 constitute a propeptide that is removed on maturation; sequence DYSRDQRQYRAVRLGDEMRTFKGA. 3 cysteine pairs are disulfide-bonded: Cys-49–Cys-62, Cys-56–Cys-67, and Cys-61–Cys-77.

It belongs to the conotoxin O1 superfamily. Expressed by the venom duct.

The protein resides in the secreted. The polypeptide is Conotoxin 1 (Conus vexillum (Flag cone)).